The sequence spans 1496 residues: Synaptojanin-2 (1496 aa).

The SAC domain maps to 120-444; that stretch reads LKKILSSGVF…GHGLSKVFTG (325 aa). An RRM domain is found at 906–985; it reads DATVIVNLQS…RAVKIRPKTK (80 aa). 6 disordered regions span residues 1047–1083, 1100–1149, 1205–1357, 1393–1413, 1442–1461, and 1468–1496; these read VVSD…HPTY, GNFR…GTHG, VPES…LQVL, SSAI…AASF, EPLD…SAQV, and RGLP…TLGV. Positions 1063 to 1074 are enriched in low complexity; that stretch reads SASTPASKSPAL. Positions 1116–1130 are enriched in pro residues; the sequence is RPRPPHPPQRPPPPT. Serine 1139 is modified (phosphoserine). The span at 1139 to 1149 shows a compositional bias: polar residues; the sequence is SDASISSGTHG. Pro residues-rich tracts occupy residues 1230 to 1239 and 1279 to 1292; these read PVLPRRPVPR and TPPP…PVPK. Positions 1324 to 1338 are enriched in low complexity; sequence ELSSPEAPEAPSLAP. 2 stretches are compositionally biased toward basic and acidic residues: residues 1470–1480 and 1487–1496; these read LPPDHGGKDFS and NKDKRTTLGV.

The protein belongs to the synaptojanin family. It in the central section; belongs to the inositol 1,4,5-trisphosphate 5-phosphatase family. Binds to GRB2. Isoform 2A binds to SYNJ2BP/OMP25. In terms of tissue distribution, widely expressed. Isoforms 2B1 and 2B2 are concentrated at nerve terminals in brain and at spermatid manchette in testis.

It is found in the cytoplasm. The protein resides in the cell membrane. It localises to the presynapse. Its subcellular location is the cytoskeleton. The protein localises to the membrane raft. It is found in the mitochondrion. The catalysed reaction is a 1,2-diacyl-sn-glycero-3-phospho-(1D-myo-inositol-4,5-bisphosphate) + H2O = a 1,2-diacyl-sn-glycero-3-phospho-(1D-myo-inositol 4-phosphate) + phosphate. Inositol 5-phosphatase which may be involved in distinct membrane trafficking and signal transduction pathways. May mediate the inhibitory effect of Rac1 on endocytosis. In Rattus norvegicus (Rat), this protein is Synaptojanin-2 (Synj2).